A 399-amino-acid polypeptide reads, in one-letter code: Chalcone synthase 2 (399 aa).

Cys-166 is a catalytic residue.

This sequence belongs to the thiolase-like superfamily. Chalcone/stilbene synthases family.

The catalysed reaction is (E)-4-coumaroyl-CoA + 3 malonyl-CoA + 3 H(+) = 2',4,4',6'-tetrahydroxychalcone + 3 CO2 + 4 CoA. It participates in secondary metabolite biosynthesis; flavonoid biosynthesis. Functionally, the primary product of this enzyme is 4,2',4',6'-tetrahydroxychalcone (also termed naringenin-chalcone or chalcone) which can under specific conditions spontaneously isomerize into naringenin. Substrate preference is feruloyl-CoA = caffeoyl-CoA &gt;&gt; cinnamoyl-CoA. In Hordeum vulgare (Barley), this protein is Chalcone synthase 2 (CHS2).